A 1674-amino-acid polypeptide reads, in one-letter code: Kinesin-like protein KIF14 (1674 aa).

The interval M1–N391 is required for PRC1-binding. Disordered stretches follow at residues E132–N158 and K171–N374. Composition is skewed to polar residues over residues G142–R151 and S202–A214. At S257 the chain carries Phosphoserine. T262 is subject to Phosphothreonine. Basic and acidic residues predominate over residues V267–P279. A compositionally biased stretch (polar residues) spans T302 to R311. Positions V317 to P329 are enriched in basic and acidic residues. A required for microtubule-binding with high affinity region spans residues N391–D772. Positions Q393–I736 constitute a Kinesin motor domain. Residue G482 to S489 participates in ATP binding. Positions N743–G826 form a coiled coil. The FHA domain occupies T860–I911. The segment at P936 to V1674 is required for CIT-binding. Residues E961–N1110 adopt a coiled-coil conformation. Phosphoserine is present on residues S973 and S1326. Residues G1618 to V1674 form a disordered region. Basic and acidic residues predominate over residues S1630–C1642. Residues A1660–V1674 are compositionally biased toward polar residues.

Belongs to the TRAFAC class myosin-kinesin ATPase superfamily. Kinesin family. Directly interacts with PRC1 within a complex also containing KIF4A, KIF20A and KIF23; targets to the central spindle. Directly interacts with CIT depending on the activation state of the kinase (stronger interaction with the kinase-dead form); targets to the midbody. Interacts with ARRB2; the interaction is detected in the nucleus upon OR1D2 stimulation. Interacts with AKT1; the interaction is detected in the plasma membrane upon INS stimulation and promotes AKT1 phosphorylation. Interacts with SVIL; at midbody during cytokinesis. Interacts with RADIL (via PDZ domain); recruits RADIL to the microtubule network restricting RADIL from interaction with activated RAP1A.

The protein resides in the nucleus. The protein localises to the cytoplasm. Its subcellular location is the cytoskeleton. It localises to the spindle. It is found in the midbody. Functionally, microtubule motor protein that binds to microtubules with high affinity through each tubulin heterodimer and has an ATPase activity. Plays a role in many processes like cell division, cytokinesis and also in cell proliferation and apoptosis. During cytokinesis, targets to central spindle and midbody through its interaction with PRC1 and CIT respectively. Regulates cell growth through regulation of cell cycle progression and cytokinesis. During cell cycle progression acts through SCF-dependent proteasomal ubiquitin-dependent protein catabolic process which controls CDKN1B degradation, resulting in positive regulation of cyclins, including CCNE1, CCND1 and CCNB1. During late neurogenesis, regulates the cerebellar and cerebral cortex development and olfactory bulb development through regulation of apoptosis, cell proliferation and cell division. Also is required for chromosome congression and alignment during mitotic cell cycle process. Regulates cell spreading, focal adhesion dynamics, and cell migration through its interaction with RADIL resulting in regulation of RAP1A-mediated inside-out integrin activation by tethering RADIL on microtubules. This Mus musculus (Mouse) protein is Kinesin-like protein KIF14.